The following is a 660-amino-acid chain: Bifunctional polymyxin resistance protein ArnA (660 aa).

Residues 1–304 are formyltransferase ArnAFT; that stretch reads MKTVVFAYHD…TLGLVQGSRL (304 aa). Residue 86-88 coordinates (6R)-10-formyltetrahydrofolate; sequence HLI. Residue histidine 104 is the Proton donor; for formyltransferase activity of the active site. Residues arginine 114 and 136–140 contribute to the (6R)-10-formyltetrahydrofolate site; that span reads VKRAD. A dehydrogenase ArnADH region spans residues 314–660; sequence RRTRVLILGV…RTVDLTDKPS (347 aa). NAD(+)-binding positions include aspartate 347 and 368–369; that span reads DI. UDP-alpha-D-glucuronate contacts are provided by residues alanine 393, tyrosine 398, and 432-433; that span reads TS. Residue glutamate 434 is the Proton acceptor; for decarboxylase activity of the active site. Residues arginine 460, asparagine 492, 526-535, and tyrosine 613 each bind UDP-alpha-D-glucuronate; that span reads KLIDGGKQKR. Arginine 619 (proton donor; for decarboxylase activity) is an active-site residue.

In the N-terminal section; belongs to the Fmt family. UDP-L-Ara4N formyltransferase subfamily. It in the C-terminal section; belongs to the NAD(P)-dependent epimerase/dehydratase family. UDP-glucuronic acid decarboxylase subfamily. In terms of assembly, homohexamer, formed by a dimer of trimers.

The enzyme catalyses UDP-alpha-D-glucuronate + NAD(+) = UDP-beta-L-threo-pentopyranos-4-ulose + CO2 + NADH. It catalyses the reaction UDP-4-amino-4-deoxy-beta-L-arabinose + (6R)-10-formyltetrahydrofolate = UDP-4-deoxy-4-formamido-beta-L-arabinose + (6S)-5,6,7,8-tetrahydrofolate + H(+). It participates in nucleotide-sugar biosynthesis; UDP-4-deoxy-4-formamido-beta-L-arabinose biosynthesis; UDP-4-deoxy-4-formamido-beta-L-arabinose from UDP-alpha-D-glucuronate: step 1/3. Its pathway is nucleotide-sugar biosynthesis; UDP-4-deoxy-4-formamido-beta-L-arabinose biosynthesis; UDP-4-deoxy-4-formamido-beta-L-arabinose from UDP-alpha-D-glucuronate: step 3/3. It functions in the pathway bacterial outer membrane biogenesis; lipopolysaccharide biosynthesis. Its function is as follows. Bifunctional enzyme that catalyzes the oxidative decarboxylation of UDP-glucuronic acid (UDP-GlcUA) to UDP-4-keto-arabinose (UDP-Ara4O) and the addition of a formyl group to UDP-4-amino-4-deoxy-L-arabinose (UDP-L-Ara4N) to form UDP-L-4-formamido-arabinose (UDP-L-Ara4FN). The modified arabinose is attached to lipid A and is required for resistance to polymyxin and cationic antimicrobial peptides. The sequence is that of Bifunctional polymyxin resistance protein ArnA from Shigella boydii serotype 4 (strain Sb227).